A 126-amino-acid chain; its full sequence is Phosphoribosyl-AMP cyclohydrolase (126 aa).

A Mg(2+)-binding site is contributed by Asp-76. Cys-77 provides a ligand contact to Zn(2+). The Mg(2+) site is built by Asp-78 and Asp-80. Zn(2+) is bound by residues Cys-94 and Cys-101.

This sequence belongs to the PRA-CH family. As to quaternary structure, homodimer. Requires Mg(2+) as cofactor. Zn(2+) is required as a cofactor.

The protein resides in the cytoplasm. The catalysed reaction is 1-(5-phospho-beta-D-ribosyl)-5'-AMP + H2O = 1-(5-phospho-beta-D-ribosyl)-5-[(5-phospho-beta-D-ribosylamino)methylideneamino]imidazole-4-carboxamide. It participates in amino-acid biosynthesis; L-histidine biosynthesis; L-histidine from 5-phospho-alpha-D-ribose 1-diphosphate: step 3/9. Functionally, catalyzes the hydrolysis of the adenine ring of phosphoribosyl-AMP. This chain is Phosphoribosyl-AMP cyclohydrolase, found in Vesicomyosocius okutanii subsp. Calyptogena okutanii (strain HA).